Consider the following 370-residue polypeptide: MAIMVDPPNGMGNQGKYYYSMWQTLFEIDTKYVPIKPIGRGAYGIVCSSINRETNEKVAIKKIHNVFDNRVDALRTLRELKLLRHLRHENVIALKDIMMPVHRRSFKDVYLVYELMDTDLHQIIKSPQGLSNDHCQYFLFQLLRGLKYLHSAEILHRDLKPGNLLVNANCDLKICDFGLARTNSSKGQFMTEYVVTRWYRAPELLLCCDNYGTSIDVWSVGCIFAELLGRKPIFPGTECLNQLKLIVNVLGTMSESDLEFIDNPKARRYIKSLPYTPGVPLASMYPHAHPLAIDLLQKMLIFDPTKRISVTEALEHPYMSPLYDPSANPPAQVPIDLDIDENISADMIREMMWHEMLHYHPEVVAAMSAR.

A Protein kinase domain is found at 32 to 319 (YVPIKPIGRG…VTEALEHPYM (288 aa)). ATP is bound by residues 38–46 (IGRGAYGIV) and K61. Catalysis depends on D158, which acts as the Proton acceptor. T191 is modified (phosphothreonine). The TXY motif lies at 191-193 (TEY). Y193 is subject to Phosphotyrosine.

This sequence belongs to the protein kinase superfamily. CMGC Ser/Thr protein kinase family. MAP kinase subfamily. Dually phosphorylated on Thr-191 and Tyr-193, which activates the enzyme.

It carries out the reaction L-seryl-[protein] + ATP = O-phospho-L-seryl-[protein] + ADP + H(+). The catalysed reaction is L-threonyl-[protein] + ATP = O-phospho-L-threonyl-[protein] + ADP + H(+). With respect to regulation, activated by threonine and tyrosine phosphorylation. This is Mitogen-activated protein kinase 3 (MPK3) from Oryza sativa subsp. japonica (Rice).